A 414-amino-acid polypeptide reads, in one-letter code: uncharacterized protein (414 aa).

Positions 87-117 (KTNDDNKTNGRETHLRPSPSKPEYTGRPTQN) are disordered. The span at 88–101 (TNDDNKTNGRETHL) shows a compositional bias: basic and acidic residues. A coiled-coil region spans residues 243–405 (SMLQSSIDKL…RNKLEMEVER (163 aa)).

This is an uncharacterized protein from Encephalitozoon cuniculi (strain GB-M1) (Microsporidian parasite).